Consider the following 97-residue polypeptide: Essential MCU regulator, mitochondrial (97 aa).

The transit peptide at 1-37 (MAARMGVLSVAGFRAAARAGGLLARPKQSTAVVPCRT) directs the protein to the mitochondrion. Topologically, residues 38-55 (VIASSAGAILPKPEKVSF) are mitochondrial matrix. A helical transmembrane segment spans residues 56 to 75 (GLLRVFTVVIPFLYIGTLIS). Residues 76–97 (KNFAAVLEEHDIFVPEDDDDDD) lie on the Mitochondrial intermembrane side of the membrane.

Belongs to the SMDT1/EMRE family. In terms of assembly, component of the uniplex complex.

The protein resides in the mitochondrion inner membrane. In terms of biological role, essential regulatory subunit of the mitochondrial calcium uniporter complex (uniplex), a complex that mediates calcium uptake into mitochondria. Required to bridge the calcium-sensing proteins micu1 with the calcium-conducting subunit mcu. Acts by mediating activation of mcu and retention of micu1 to the mcu pore, in order to ensure tight regulation of the uniplex complex and appropriate responses to intracellular calcium signaling. This chain is Essential MCU regulator, mitochondrial, found in Xenopus laevis (African clawed frog).